Here is a 181-residue protein sequence, read N- to C-terminus: MRILGIDPGLRRTGFGVVDAEGSRLRYIASGTIVVPPDLALAQRLKVILDNLREVARETRPDVAALEIVFLNANPSSTLLLGHARGAALCALAESGLDVHEYTALQIKKSTVGTGRAAKEQVQMMVQHLLSLNGTPAPDSADALACAICHAHTGPLQERLSPLAATSRSGKSRIRKGRLLG.

Residues Asp-7, Glu-67, and Asp-139 contribute to the active site. Mg(2+) is bound by residues Asp-7, Glu-67, and Asp-139.

Belongs to the RuvC family. Homodimer which binds Holliday junction (HJ) DNA. The HJ becomes 2-fold symmetrical on binding to RuvC with unstacked arms; it has a different conformation from HJ DNA in complex with RuvA. In the full resolvosome a probable DNA-RuvA(4)-RuvB(12)-RuvC(2) complex forms which resolves the HJ. It depends on Mg(2+) as a cofactor.

The protein resides in the cytoplasm. The catalysed reaction is Endonucleolytic cleavage at a junction such as a reciprocal single-stranded crossover between two homologous DNA duplexes (Holliday junction).. Its function is as follows. The RuvA-RuvB-RuvC complex processes Holliday junction (HJ) DNA during genetic recombination and DNA repair. Endonuclease that resolves HJ intermediates. Cleaves cruciform DNA by making single-stranded nicks across the HJ at symmetrical positions within the homologous arms, yielding a 5'-phosphate and a 3'-hydroxyl group; requires a central core of homology in the junction. The consensus cleavage sequence is 5'-(A/T)TT(C/G)-3'. Cleavage occurs on the 3'-side of the TT dinucleotide at the point of strand exchange. HJ branch migration catalyzed by RuvA-RuvB allows RuvC to scan DNA until it finds its consensus sequence, where it cleaves and resolves the cruciform DNA. In Bordetella avium (strain 197N), this protein is Crossover junction endodeoxyribonuclease RuvC.